We begin with the raw amino-acid sequence, 159 residues long: MNHSETITIECTINGMPFQLHAVPGTPLSELLREQGLLSVKQGCCVGECGACTVLVDGTAIDSCLYLAAWAEGKEIRTLEGEAKGGKLSHVQQAYAKSGAVQCGFCTPGLIMATTAMLAKPREKPLTITEIRRGLAGNLCRCTGYQMIVNTVLDCEKTK.

Residues 7–82 (ITIECTINGM…GKEIRTLEGE (76 aa)) form the 2Fe-2S ferredoxin-type domain. Residues Cys44, Cys49, and Cys52 each contribute to the [2Fe-2S] cluster site.

Heterotrimer of XdhA, XdhB and XdhC. Requires [2Fe-2S] cluster as cofactor.

It participates in purine metabolism; hypoxanthine degradation; urate from hypoxanthine: step 1/2. Its function is as follows. Iron-sulfur subunit of the xanthine dehydrogenase complex. The protein is Xanthine dehydrogenase iron-sulfur-binding subunit (xdhC) of Escherichia coli O157:H7.